The following is a 115-amino-acid chain: Replication initiation control protein YabA (115 aa).

Zn(2+)-binding residues include H90, C92, C106, and C109.

It belongs to the YabA family. Homotetramer. Interacts with both DnaA and DnaN, acting as a bridge between these two proteins. Requires Zn(2+) as cofactor.

It is found in the cytoplasm. The protein localises to the nucleoid. Its function is as follows. Involved in control of chromosome replication initiation. Inhibits the cooperative binding of DnaA to the oriC region, thus negatively regulating initiation of chromosome replication. Inhibits the ability of DnaA-ATP to form a helix on DNA; does not disassemble preformed DnaA-DNA helices. Decreases the residence time of DnaA on the chromosome at its binding sites (oriC, replication forks and promoter-binding sites). Tethers DnaA to the replication machinery via the DNA polymerase beta sliding clamp subunit (dnaN). Associates with oriC and other DnaA targets on the chromosome in a DnaA-dependent manner. In Staphylococcus aureus (strain JH1), this protein is Replication initiation control protein YabA.